We begin with the raw amino-acid sequence, 71 residues long: MQKDIHPNYQEITATCSCGNVIKTRSTVGHDLNLDVCGACHPFYTGKQRVVDTGGRVDRFNKRFSIPVGKK.

The Zn(2+) site is built by cysteine 16, cysteine 18, cysteine 37, and cysteine 40.

This sequence belongs to the bacterial ribosomal protein bL31 family. Type A subfamily. Part of the 50S ribosomal subunit. It depends on Zn(2+) as a cofactor.

In terms of biological role, binds the 23S rRNA. The protein is Large ribosomal subunit protein bL31 of Sodalis glossinidius (strain morsitans).